The sequence spans 277 residues: Phosphatidylserine decarboxylase proenzyme (277 aa).

Residues Asp-88, His-144, and Ser-242 each act as charge relay system; for autoendoproteolytic cleavage activity in the active site. Ser-242 acts as the Schiff-base intermediate with substrate; via pyruvic acid; for decarboxylase activity in catalysis. Pyruvic acid (Ser); by autocatalysis is present on Ser-242.

Belongs to the phosphatidylserine decarboxylase family. PSD-B subfamily. Prokaryotic type I sub-subfamily. Heterodimer of a large membrane-associated beta subunit and a small pyruvoyl-containing alpha subunit. Requires pyruvate as cofactor. In terms of processing, is synthesized initially as an inactive proenzyme. Formation of the active enzyme involves a self-maturation process in which the active site pyruvoyl group is generated from an internal serine residue via an autocatalytic post-translational modification. Two non-identical subunits are generated from the proenzyme in this reaction, and the pyruvate is formed at the N-terminus of the alpha chain, which is derived from the carboxyl end of the proenzyme. The autoendoproteolytic cleavage occurs by a canonical serine protease mechanism, in which the side chain hydroxyl group of the serine supplies its oxygen atom to form the C-terminus of the beta chain, while the remainder of the serine residue undergoes an oxidative deamination to produce ammonia and the pyruvoyl prosthetic group on the alpha chain. During this reaction, the Ser that is part of the protease active site of the proenzyme becomes the pyruvoyl prosthetic group, which constitutes an essential element of the active site of the mature decarboxylase.

It localises to the cell membrane. The enzyme catalyses a 1,2-diacyl-sn-glycero-3-phospho-L-serine + H(+) = a 1,2-diacyl-sn-glycero-3-phosphoethanolamine + CO2. It participates in phospholipid metabolism; phosphatidylethanolamine biosynthesis; phosphatidylethanolamine from CDP-diacylglycerol: step 2/2. Its function is as follows. Catalyzes the formation of phosphatidylethanolamine (PtdEtn) from phosphatidylserine (PtdSer). This chain is Phosphatidylserine decarboxylase proenzyme, found in Psychrobacter arcticus (strain DSM 17307 / VKM B-2377 / 273-4).